The following is a 116-amino-acid chain: Large ribosomal subunit protein uL18 (116 aa).

It belongs to the universal ribosomal protein uL18 family. Part of the 50S ribosomal subunit; part of the 5S rRNA/L5/L18/L25 subcomplex. Contacts the 5S and 23S rRNAs.

Its function is as follows. This is one of the proteins that bind and probably mediate the attachment of the 5S RNA into the large ribosomal subunit, where it forms part of the central protuberance. The polypeptide is Large ribosomal subunit protein uL18 (Mycoplasma mycoides subsp. mycoides SC (strain CCUG 32753 / NCTC 10114 / PG1)).